The primary structure comprises 705 residues: Elongation factor G (705 aa).

A tr-type G domain is found at 8–290; that stretch reads ERYRNFGIMA…GVVHLLPSPA (283 aa). Residues 17-24, 88-92, and 142-145 each bind GTP; these read AHIDAGKT, DTPGH, and NKMD. A disordered region spans residues 290-309; the sequence is ADRPPVQGIDEDEKEDTRAA.

This sequence belongs to the TRAFAC class translation factor GTPase superfamily. Classic translation factor GTPase family. EF-G/EF-2 subfamily.

Its subcellular location is the cytoplasm. Functionally, catalyzes the GTP-dependent ribosomal translocation step during translation elongation. During this step, the ribosome changes from the pre-translocational (PRE) to the post-translocational (POST) state as the newly formed A-site-bound peptidyl-tRNA and P-site-bound deacylated tRNA move to the P and E sites, respectively. Catalyzes the coordinated movement of the two tRNA molecules, the mRNA and conformational changes in the ribosome. The polypeptide is Elongation factor G (Xanthomonas euvesicatoria pv. vesicatoria (strain 85-10) (Xanthomonas campestris pv. vesicatoria)).